Reading from the N-terminus, the 424-residue chain is CinA-like protein (424 aa).

The protein belongs to the CinA family.

This Shewanella halifaxensis (strain HAW-EB4) protein is CinA-like protein.